Consider the following 589-residue polypeptide: Aspartate--tRNA ligase (589 aa).

L-aspartate is bound at residue Glu171. Residues Gln195 to Lys198 form an aspartate region. Arg217 contacts L-aspartate. ATP-binding positions include Arg217 to Glu219 and Gln226. Residue His448 coordinates L-aspartate. Glu482 serves as a coordination point for ATP. Arg489 provides a ligand contact to L-aspartate. Residue Gly534 to Arg537 coordinates ATP.

It belongs to the class-II aminoacyl-tRNA synthetase family. Type 1 subfamily. As to quaternary structure, homodimer.

It localises to the cytoplasm. The catalysed reaction is tRNA(Asp) + L-aspartate + ATP = L-aspartyl-tRNA(Asp) + AMP + diphosphate. In terms of biological role, catalyzes the attachment of L-aspartate to tRNA(Asp) in a two-step reaction: L-aspartate is first activated by ATP to form Asp-AMP and then transferred to the acceptor end of tRNA(Asp). This chain is Aspartate--tRNA ligase, found in Idiomarina loihiensis (strain ATCC BAA-735 / DSM 15497 / L2-TR).